A 262-amino-acid polypeptide reads, in one-letter code: 4-hydroxy-tetrahydrodipicolinate reductase (262 aa).

9–14 (GCLGRM) provides a ligand contact to NAD(+). R36 is an NADP(+) binding site. Residues 100 to 102 (GTT) and 121 to 124 (SANM) contribute to the NAD(+) site. H154 functions as the Proton donor/acceptor in the catalytic mechanism. Residue H155 participates in (S)-2,3,4,5-tetrahydrodipicolinate binding. Residue K158 is the Proton donor of the active site. Residue 164–165 (GT) participates in (S)-2,3,4,5-tetrahydrodipicolinate binding.

It belongs to the DapB family.

The protein localises to the cytoplasm. The catalysed reaction is (S)-2,3,4,5-tetrahydrodipicolinate + NAD(+) + H2O = (2S,4S)-4-hydroxy-2,3,4,5-tetrahydrodipicolinate + NADH + H(+). It carries out the reaction (S)-2,3,4,5-tetrahydrodipicolinate + NADP(+) + H2O = (2S,4S)-4-hydroxy-2,3,4,5-tetrahydrodipicolinate + NADPH + H(+). It functions in the pathway amino-acid biosynthesis; L-lysine biosynthesis via DAP pathway; (S)-tetrahydrodipicolinate from L-aspartate: step 4/4. Its function is as follows. Catalyzes the conversion of 4-hydroxy-tetrahydrodipicolinate (HTPA) to tetrahydrodipicolinate. This chain is 4-hydroxy-tetrahydrodipicolinate reductase, found in Wolbachia pipientis subsp. Culex pipiens (strain wPip).